Reading from the N-terminus, the 262-residue chain is Hydroxyethylthiazole kinase (262 aa).

Residue Met50 participates in substrate binding. Arg125 and Thr171 together coordinate ATP. Gly198 contributes to the substrate binding site.

It belongs to the Thz kinase family. It depends on Mg(2+) as a cofactor.

It carries out the reaction 5-(2-hydroxyethyl)-4-methylthiazole + ATP = 4-methyl-5-(2-phosphooxyethyl)-thiazole + ADP + H(+). It functions in the pathway cofactor biosynthesis; thiamine diphosphate biosynthesis; 4-methyl-5-(2-phosphoethyl)-thiazole from 5-(2-hydroxyethyl)-4-methylthiazole: step 1/1. Catalyzes the phosphorylation of the hydroxyl group of 4-methyl-5-beta-hydroxyethylthiazole (THZ). The chain is Hydroxyethylthiazole kinase from Escherichia coli O139:H28 (strain E24377A / ETEC).